Reading from the N-terminus, the 278-residue chain is Shikimate dehydrogenase (NADP(+)) (278 aa).

Residues 18–20 and Thr-65 each bind shikimate; that span reads SKS. Lys-69 (proton acceptor) is an active-site residue. Glu-81 contacts NADP(+). Residues Asn-90 and Asp-106 each contribute to the shikimate site. NADP(+) is bound by residues 130 to 134 and 154 to 159; these read GAGGA and NRTFAK. Shikimate is bound at residue Tyr-223. Residue Gly-241 coordinates NADP(+).

This sequence belongs to the shikimate dehydrogenase family. Homodimer.

The enzyme catalyses shikimate + NADP(+) = 3-dehydroshikimate + NADPH + H(+). The protein operates within metabolic intermediate biosynthesis; chorismate biosynthesis; chorismate from D-erythrose 4-phosphate and phosphoenolpyruvate: step 4/7. Involved in the biosynthesis of the chorismate, which leads to the biosynthesis of aromatic amino acids. Catalyzes the reversible NADPH linked reduction of 3-dehydroshikimate (DHSA) to yield shikimate (SA). This chain is Shikimate dehydrogenase (NADP(+)), found in Vibrio cholerae serotype O1 (strain ATCC 39541 / Classical Ogawa 395 / O395).